A 174-amino-acid polypeptide reads, in one-letter code: Inosine/xanthosine triphosphatase (174 aa).

A Mg(2+)-binding site is contributed by D68. A substrate-binding site is contributed by 68 to 69 (DA).

It belongs to the YjjX NTPase family. Homodimer. It depends on Mg(2+) as a cofactor. The cofactor is Mn(2+).

The catalysed reaction is XTP + H2O = XDP + phosphate + H(+). It catalyses the reaction ITP + H2O = IDP + phosphate + H(+). Its function is as follows. Phosphatase that hydrolyzes non-canonical purine nucleotides such as XTP and ITP to their respective diphosphate derivatives. Probably excludes non-canonical purines from DNA/RNA precursor pool, thus preventing their incorporation into DNA/RNA and avoiding chromosomal lesions. This Photobacterium profundum (strain SS9) protein is Inosine/xanthosine triphosphatase.